A 393-amino-acid polypeptide reads, in one-letter code: Acetylornithine aminotransferase (393 aa).

Residues 100-101 and F133 contribute to the pyridoxal 5'-phosphate site; that span reads GA. R136 provides a ligand contact to N(2)-acetyl-L-ornithine. Position 218 to 221 (218 to 221) interacts with pyridoxal 5'-phosphate; that stretch reads DEVQ. Residue K247 is modified to N6-(pyridoxal phosphate)lysine. S274 is a binding site for N(2)-acetyl-L-ornithine. Position 275 (T275) interacts with pyridoxal 5'-phosphate.

Belongs to the class-III pyridoxal-phosphate-dependent aminotransferase family. ArgD subfamily. As to quaternary structure, homodimer. Pyridoxal 5'-phosphate is required as a cofactor.

The protein localises to the cytoplasm. The enzyme catalyses N(2)-acetyl-L-ornithine + 2-oxoglutarate = N-acetyl-L-glutamate 5-semialdehyde + L-glutamate. The protein operates within amino-acid biosynthesis; L-arginine biosynthesis; N(2)-acetyl-L-ornithine from L-glutamate: step 4/4. This Caldanaerobacter subterraneus subsp. tengcongensis (strain DSM 15242 / JCM 11007 / NBRC 100824 / MB4) (Thermoanaerobacter tengcongensis) protein is Acetylornithine aminotransferase.